A 431-amino-acid chain; its full sequence is 3-isopropylmalate dehydratase large subunit (431 aa).

3 residues coordinate [4Fe-4S] cluster: cysteine 308, cysteine 368, and cysteine 371.

The protein belongs to the aconitase/IPM isomerase family. LeuC type 2 subfamily. In terms of assembly, heterodimer of LeuC and LeuD. It depends on [4Fe-4S] cluster as a cofactor.

It carries out the reaction (2R,3S)-3-isopropylmalate = (2S)-2-isopropylmalate. It functions in the pathway amino-acid biosynthesis; L-leucine biosynthesis; L-leucine from 3-methyl-2-oxobutanoate: step 2/4. In terms of biological role, catalyzes the isomerization between 2-isopropylmalate and 3-isopropylmalate, via the formation of 2-isopropylmaleate. The chain is 3-isopropylmalate dehydratase large subunit from Desulfosudis oleivorans (strain DSM 6200 / JCM 39069 / Hxd3) (Desulfococcus oleovorans).